Consider the following 315-residue polypeptide: Probable serine acetyltransferase 4 (315 aa).

Residues 287–315 are disordered; it reads AKPIIGKKAAPQRRPEELPGVTMEQRWSD.

This sequence belongs to the transferase hexapeptide repeat family. Homomultimer.

It carries out the reaction L-serine + acetyl-CoA = O-acetyl-L-serine + CoA. Its pathway is amino-acid biosynthesis; L-cysteine biosynthesis; L-cysteine from L-serine: step 1/2. This is Probable serine acetyltransferase 4 (SAT4) from Oryza sativa subsp. japonica (Rice).